A 162-amino-acid chain; its full sequence is 2-C-methyl-D-erythritol 2,4-cyclodiphosphate synthase (162 aa).

Aspartate 12 and histidine 14 together coordinate a divalent metal cation. 4-CDP-2-C-methyl-D-erythritol 2-phosphate contacts are provided by residues 12-14 (DVH) and 38-39 (HS). Histidine 46 serves as a coordination point for a divalent metal cation. 4-CDP-2-C-methyl-D-erythritol 2-phosphate-binding positions include 60–62 (DIG), 65–69 (FPDTD), and arginine 146.

The protein belongs to the IspF family. Homotrimer. A divalent metal cation is required as a cofactor.

The catalysed reaction is 4-CDP-2-C-methyl-D-erythritol 2-phosphate = 2-C-methyl-D-erythritol 2,4-cyclic diphosphate + CMP. Its pathway is isoprenoid biosynthesis; isopentenyl diphosphate biosynthesis via DXP pathway; isopentenyl diphosphate from 1-deoxy-D-xylulose 5-phosphate: step 4/6. In terms of biological role, involved in the biosynthesis of isopentenyl diphosphate (IPP) and dimethylallyl diphosphate (DMAPP), two major building blocks of isoprenoid compounds. Catalyzes the conversion of 4-diphosphocytidyl-2-C-methyl-D-erythritol 2-phosphate (CDP-ME2P) to 2-C-methyl-D-erythritol 2,4-cyclodiphosphate (ME-CPP) with a corresponding release of cytidine 5-monophosphate (CMP). This chain is 2-C-methyl-D-erythritol 2,4-cyclodiphosphate synthase, found in Bordetella parapertussis (strain 12822 / ATCC BAA-587 / NCTC 13253).